The primary structure comprises 950 residues: Glycine dehydrogenase (decarboxylating) (950 aa).

Residue Lys698 is modified to N6-(pyridoxal phosphate)lysine.

The protein belongs to the GcvP family. As to quaternary structure, the glycine cleavage system is composed of four proteins: P, T, L and H. It depends on pyridoxal 5'-phosphate as a cofactor.

It carries out the reaction N(6)-[(R)-lipoyl]-L-lysyl-[glycine-cleavage complex H protein] + glycine + H(+) = N(6)-[(R)-S(8)-aminomethyldihydrolipoyl]-L-lysyl-[glycine-cleavage complex H protein] + CO2. Its function is as follows. The glycine cleavage system catalyzes the degradation of glycine. The P protein binds the alpha-amino group of glycine through its pyridoxal phosphate cofactor; CO(2) is released and the remaining methylamine moiety is then transferred to the lipoamide cofactor of the H protein. The polypeptide is Glycine dehydrogenase (decarboxylating) (Neisseria meningitidis serogroup C (strain 053442)).